The sequence spans 574 residues: Regulatory protein NPR4 (574 aa).

The disordered stretch occupies residues Met-1–Asn-21. A compositionally biased stretch (low complexity) spans Ser-9–Ser-20. Ser-11 carries the phosphoserine modification. The BTB domain maps to Thr-54–Pro-130. The C2HC NPR-type zinc-finger motif lies at Val-133–Lys-147. Zn(2+) is bound by residues Cys-136, Cys-141, His-143, and Cys-146. 3 ANK repeats span residues Glu-252–Leu-280, Asp-281–Phe-311, and Arg-315–Asp-344. The interval Glu-373–Pro-516 is salicylic acid-binding core (SBC). Arg-419 contacts salicylate. The interval Pro-521–Thr-574 is disordered. Positions Arg-535–Ala-553 are enriched in basic and acidic residues. Residues Arg-554–Arg-567 show a composition bias toward low complexity.

This sequence belongs to the plant 'ANKYRIN-BTB/POZ' family. 'NPR1-like' subfamily. As to quaternary structure, forms homodimers, homotetramers and heterodimers with NPR3 in the presence of salicylic acid (SA). Interacts with TGA2, TGA3, TGA5, TGA6 and TGA7. Interacts with CUL3A, a core component of the cullin-RING ubiquitin ligases (CRL). Binds to NPR1; this interaction is disrupted by association with SA, probably due to conformational changes.

It is found in the nucleus. It participates in protein modification; protein ubiquitination. In terms of biological role, salicylic acid (SA)-binding substrate-specific adapter of an E3 ubiquitin-protein ligase complex (CUL3-RBX1-BTB) which mediates the ubiquitination and subsequent proteasomal degradation of NPR1 in the absence of SA. Together with NPR3, acts as receptor of salicylic acid to monitor immunity in a NPR1-dependent manner and induce systemic acquired resistance (SAR). Involved in the regulation of basal defense responses against pathogens, and may be implicated in the cross-talk between the SA- and JA-dependent signaling pathways. The protein is Regulatory protein NPR4 of Arabidopsis thaliana (Mouse-ear cress).